The following is a 155-amino-acid chain: NADPH-dependent 7-cyano-7-deazaguanine reductase (155 aa).

Cys-52 (thioimide intermediate) is an active-site residue. The active-site Proton donor is the Asp-59. Substrate is bound by residues 74–76 and 93–94; these read VES and HE.

This sequence belongs to the GTP cyclohydrolase I family. QueF type 1 subfamily.

Its subcellular location is the cytoplasm. It carries out the reaction 7-aminomethyl-7-carbaguanine + 2 NADP(+) = 7-cyano-7-deazaguanine + 2 NADPH + 3 H(+). It participates in tRNA modification; tRNA-queuosine biosynthesis. Functionally, catalyzes the NADPH-dependent reduction of 7-cyano-7-deazaguanine (preQ0) to 7-aminomethyl-7-deazaguanine (preQ1). The protein is NADPH-dependent 7-cyano-7-deazaguanine reductase of Syntrophobacter fumaroxidans (strain DSM 10017 / MPOB).